Consider the following 539-residue polypeptide: Carotene epsilon-monooxygenase, chloroplastic (539 aa).

A chloroplast-targeting transit peptide spans methionine 1 to arginine 36. Cysteine 487 contributes to the heme binding site.

The protein belongs to the cytochrome P450 family. The cofactor is heme.

Its subcellular location is the plastid. The protein localises to the chloroplast. It catalyses the reaction alpha-carotene + reduced [NADPH--hemoprotein reductase] + O2 = alpha-cryptoxanthin + oxidized [NADPH--hemoprotein reductase] + H2O + H(+). The catalysed reaction is zeinoxanthin + reduced [NADPH--hemoprotein reductase] + O2 = lutein + oxidized [NADPH--hemoprotein reductase] + H2O + H(+). Functionally, heme-containing cytochrome P450 involved in the biosynthesis of xanthophylls. Specific for epsilon- and beta-ring hydroxylation of alpha-carotene. Has only a low activity toward the beta-rings of beta-carotene. The preferred substrate in planta is not alpha-carotene but the epsilon-ring of zeinoxanthin. Possesses a major beta-carotene hydroxylase activity in planta when depleted in its preferred substrate alpha-carotene. The chain is Carotene epsilon-monooxygenase, chloroplastic (CYP97C1) from Arabidopsis thaliana (Mouse-ear cress).